The sequence spans 383 residues: Na(+)/H(+) antiporter NhaA (383 aa).

11 helical membrane-spanning segments follow: residues 10 to 30, 56 to 76, 91 to 111, 121 to 141, 150 to 170, 174 to 194, 206 to 226, 254 to 274, 275 to 295, 327 to 347, and 355 to 375; these read LIGG…NNSP, LMHW…GLEI, IITP…IYLS, GWAI…ALLG, LLVI…IAIF, SLSL…IICN, VVLG…ATLA, PWII…ISFS, GISF…GLFV, GISL…VLAF, and AIKI…YIVL.

The protein belongs to the NhaA Na(+)/H(+) (TC 2.A.33) antiporter family.

The protein localises to the cell inner membrane. It carries out the reaction Na(+)(in) + 2 H(+)(out) = Na(+)(out) + 2 H(+)(in). Functionally, na(+)/H(+) antiporter that extrudes sodium in exchange for external protons. The chain is Na(+)/H(+) antiporter NhaA from Francisella tularensis subsp. novicida (strain U112).